The following is a 220-amino-acid chain: GTP cyclohydrolase 1 (220 aa).

Residues Cys109, His112, and Cys180 each contribute to the Zn(2+) site.

This sequence belongs to the GTP cyclohydrolase I family. In terms of assembly, homomer.

The enzyme catalyses GTP + H2O = 7,8-dihydroneopterin 3'-triphosphate + formate + H(+). Its pathway is cofactor biosynthesis; 7,8-dihydroneopterin triphosphate biosynthesis; 7,8-dihydroneopterin triphosphate from GTP: step 1/1. This Pectobacterium carotovorum subsp. carotovorum (strain PC1) protein is GTP cyclohydrolase 1.